The following is a 93-amino-acid chain: Small ribosomal subunit protein bS18 (93 aa).

The protein belongs to the bacterial ribosomal protein bS18 family. Part of the 30S ribosomal subunit. Forms a tight heterodimer with protein bS6.

Functionally, binds as a heterodimer with protein bS6 to the central domain of the 16S rRNA, where it helps stabilize the platform of the 30S subunit. This chain is Small ribosomal subunit protein bS18, found in Paracidovorax citrulli (strain AAC00-1) (Acidovorax citrulli).